Here is a 191-residue protein sequence, read N- to C-terminus: Molybdenum cofactor guanylyltransferase (191 aa).

Residues 11–13, K23, D66, and D97 contribute to the GTP site; that span reads LCG. Position 97 (D97) interacts with Mg(2+).

The protein belongs to the MobA family. As to quaternary structure, monomer. Mg(2+) serves as cofactor.

The protein resides in the cytoplasm. The catalysed reaction is Mo-molybdopterin + GTP + H(+) = Mo-molybdopterin guanine dinucleotide + diphosphate. Functionally, transfers a GMP moiety from GTP to Mo-molybdopterin (Mo-MPT) cofactor (Moco or molybdenum cofactor) to form Mo-molybdopterin guanine dinucleotide (Mo-MGD) cofactor. This is Molybdenum cofactor guanylyltransferase from Campylobacter jejuni subsp. jejuni serotype O:2 (strain ATCC 700819 / NCTC 11168).